The chain runs to 213 residues: Thiamine-phosphate synthase (213 aa).

4-amino-2-methyl-5-(diphosphooxymethyl)pyrimidine-binding positions include 38–42 (QLREK) and N73. The Mg(2+) site is built by D74 and D93. S111 provides a ligand contact to 4-amino-2-methyl-5-(diphosphooxymethyl)pyrimidine. 137–139 (TTS) is a 2-[(2R,5Z)-2-carboxy-4-methylthiazol-5(2H)-ylidene]ethyl phosphate binding site. K140 is a 4-amino-2-methyl-5-(diphosphooxymethyl)pyrimidine binding site. 2-[(2R,5Z)-2-carboxy-4-methylthiazol-5(2H)-ylidene]ethyl phosphate-binding positions include G169 and 189-190 (IS).

It belongs to the thiamine-phosphate synthase family. Mg(2+) is required as a cofactor.

The catalysed reaction is 2-[(2R,5Z)-2-carboxy-4-methylthiazol-5(2H)-ylidene]ethyl phosphate + 4-amino-2-methyl-5-(diphosphooxymethyl)pyrimidine + 2 H(+) = thiamine phosphate + CO2 + diphosphate. It catalyses the reaction 2-(2-carboxy-4-methylthiazol-5-yl)ethyl phosphate + 4-amino-2-methyl-5-(diphosphooxymethyl)pyrimidine + 2 H(+) = thiamine phosphate + CO2 + diphosphate. The enzyme catalyses 4-methyl-5-(2-phosphooxyethyl)-thiazole + 4-amino-2-methyl-5-(diphosphooxymethyl)pyrimidine + H(+) = thiamine phosphate + diphosphate. Its pathway is cofactor biosynthesis; thiamine diphosphate biosynthesis; thiamine phosphate from 4-amino-2-methyl-5-diphosphomethylpyrimidine and 4-methyl-5-(2-phosphoethyl)-thiazole: step 1/1. In terms of biological role, condenses 4-methyl-5-(beta-hydroxyethyl)thiazole monophosphate (THZ-P) and 2-methyl-4-amino-5-hydroxymethyl pyrimidine pyrophosphate (HMP-PP) to form thiamine monophosphate (TMP). This is Thiamine-phosphate synthase from Lysinibacillus sphaericus (strain C3-41).